The following is a 207-amino-acid chain: N-(5'-phosphoribosyl)anthranilate isomerase (207 aa).

It belongs to the TrpF family.

It carries out the reaction N-(5-phospho-beta-D-ribosyl)anthranilate = 1-(2-carboxyphenylamino)-1-deoxy-D-ribulose 5-phosphate. It participates in amino-acid biosynthesis; L-tryptophan biosynthesis; L-tryptophan from chorismate: step 3/5. In Stutzerimonas stutzeri (strain A1501) (Pseudomonas stutzeri), this protein is N-(5'-phosphoribosyl)anthranilate isomerase.